A 231-amino-acid polypeptide reads, in one-letter code: Small ribosomal subunit protein uS2 (231 aa).

The interval methionine 1–glutamate 23 is disordered. Over residues serine 7–glutamate 23 the composition is skewed to basic and acidic residues.

The protein belongs to the universal ribosomal protein uS2 family.

The protein is Small ribosomal subunit protein uS2 (rps2) of Saccharolobus solfataricus (strain ATCC 35092 / DSM 1617 / JCM 11322 / P2) (Sulfolobus solfataricus).